The sequence spans 604 residues: Kelch-like protein 20 (604 aa).

One can recognise a BTB domain in the interval C63–E130. A BACK domain is found at C165–G267. 6 Kelch repeats span residues V314 to D360, L362 to G408, F409 to G455, L457 to D502, I504 to G549, and L551 to M596.

In terms of assembly, component of the BCR(KLHL20) E3 ubiquitin ligase complex, at least composed of CUL3, KLHL20 and RBX1. Interacts with PDZ-RhoGEF/ARHGEF11, DAPK1, PML and CORO7. Interacts with F-actin. Interacts with IFN-gamma (IFNG). Interacts (via kelch repeats) with IVNS1ABP (via kelch repeats); this interaction blocks the assembly of CUL3-KLHL20 complex.

The protein localises to the cytoplasm. It localises to the perinuclear region. Its subcellular location is the nucleus. The protein resides in the golgi apparatus. It is found in the trans-Golgi network. The protein localises to the cell projection. It localises to the axon. Its subcellular location is the dendrite. Its pathway is protein modification; protein ubiquitination. Its function is as follows. Substrate-specific adapter of a BCR (BTB-CUL3-RBX1) E3 ubiquitin-protein ligase complex involved in interferon response and anterograde Golgi to endosome transport. The BCR(KLHL20) E3 ubiquitin ligase complex mediates the ubiquitination of DAPK1, leading to its degradation by the proteasome, thereby acting as a negative regulator of apoptosis. The BCR(KLHL20) E3 ubiquitin ligase complex also specifically mediates 'Lys-33'-linked ubiquitination. Involved in anterograde Golgi to endosome transport by mediating 'Lys-33'-linked ubiquitination of CORO7, promoting interaction between CORO7 and EPS15, thereby facilitating actin polymerization and post-Golgi trafficking. Also acts as a regulator of endothelial migration during angiogenesis by controlling the activation of Rho GTPases. The BCR(KLHL20) E3 ubiquitin ligase complex acts as a regulator of neurite outgrowth by mediating ubiquitination and degradation of PDZ-RhoGEF/ARHGEF11. The sequence is that of Kelch-like protein 20 (Klhl20) from Mus musculus (Mouse).